The sequence spans 166 residues: Replication restart protein DnaT (166 aa).

The protein belongs to the DnaT family. Homooligomerizes. Interacts with PriB. Component of the replication restart primosome. Primosome assembly occurs via a 'hand-off' mechanism. PriA binds to replication forks, subsequently PriB then DnaT bind; DnaT then displaces ssDNA to generate the helicase loading substrate.

Its function is as follows. Involved in the restart of stalled replication forks, which reloads the replicative helicase on sites other than the origin of replication. Can function in multiple replication restart pathways. Displaces ssDNA from a PriB-ssDNA complex. Probably forms a spiral filament on ssDNA. The chain is Replication restart protein DnaT from Buchnera aphidicola subsp. Schizaphis graminum (strain Sg).